A 212-amino-acid chain; its full sequence is Imidazole glycerol phosphate synthase subunit HisH (212 aa).

The Glutamine amidotransferase type-1 domain maps to 1–210 (MIAVINYGAG…VRWSEAVQPK (210 aa)). The active-site Nucleophile is the cysteine 79. Active-site residues include histidine 185 and glutamate 187.

In terms of assembly, heterodimer of HisH and HisF.

The protein resides in the cytoplasm. The enzyme catalyses 5-[(5-phospho-1-deoxy-D-ribulos-1-ylimino)methylamino]-1-(5-phospho-beta-D-ribosyl)imidazole-4-carboxamide + L-glutamine = D-erythro-1-(imidazol-4-yl)glycerol 3-phosphate + 5-amino-1-(5-phospho-beta-D-ribosyl)imidazole-4-carboxamide + L-glutamate + H(+). It carries out the reaction L-glutamine + H2O = L-glutamate + NH4(+). Its pathway is amino-acid biosynthesis; L-histidine biosynthesis; L-histidine from 5-phospho-alpha-D-ribose 1-diphosphate: step 5/9. IGPS catalyzes the conversion of PRFAR and glutamine to IGP, AICAR and glutamate. The HisH subunit catalyzes the hydrolysis of glutamine to glutamate and ammonia as part of the synthesis of IGP and AICAR. The resulting ammonia molecule is channeled to the active site of HisF. This is Imidazole glycerol phosphate synthase subunit HisH from Chloroflexus aurantiacus (strain ATCC 29364 / DSM 637 / Y-400-fl).